A 122-amino-acid chain; its full sequence is Large ribosomal subunit protein uL14 (122 aa).

This sequence belongs to the universal ribosomal protein uL14 family. Part of the 50S ribosomal subunit. Forms a cluster with proteins L3 and L19. In the 70S ribosome, L14 and L19 interact and together make contacts with the 16S rRNA in bridges B5 and B8.

Its function is as follows. Binds to 23S rRNA. Forms part of two intersubunit bridges in the 70S ribosome. This is Large ribosomal subunit protein uL14 from Caldanaerobacter subterraneus subsp. tengcongensis (strain DSM 15242 / JCM 11007 / NBRC 100824 / MB4) (Thermoanaerobacter tengcongensis).